Consider the following 321-residue polypeptide: Endochitinase 1 (321 aa).

The first 21 residues, 1 to 21 (MSFRALSVFSLFLSYLILGSA), serve as a signal peptide directing secretion. One can recognise a Chitin-binding type-1 domain in the interval 22 to 64 (EQCGRQAGGALCPGGLCCSQFGWCGNTDDYCKKENGCQSQCSG). 7 disulfides stabilise this stretch: Cys-24/Cys-39, Cys-33/Cys-45, Cys-38/Cys-52, Cys-58/Cys-62, Cys-93/Cys-156, Cys-167/Cys-175, and Cys-274/Cys-306. Residues 65–98 (SGGDTGGLDSLITRERFDQMLLHRNDGGCPARGF) form a hinge region. The catalytic stretch occupies residues 99–321 (YTYDAFIAAA…YNNGPSVDSM (223 aa)). The active-site Proton donor is Glu-137.

Belongs to the glycosyl hydrolase 19 family. Chitinase class I subfamily.

The protein resides in the vacuole. The enzyme catalyses Random endo-hydrolysis of N-acetyl-beta-D-glucosaminide (1-&gt;4)-beta-linkages in chitin and chitodextrins.. Its function is as follows. Defense against chitin-containing fungal pathogens. The chain is Endochitinase 1 (CHIA1) from Theobroma cacao (Cacao).